A 281-amino-acid chain; its full sequence is Hydroxyethylthiazole kinase (281 aa).

ATP contacts are provided by Arg-124 and Ser-169.

The protein belongs to the Thz kinase family. Requires Mg(2+) as cofactor.

It carries out the reaction 5-(2-hydroxyethyl)-4-methylthiazole + ATP = 4-methyl-5-(2-phosphooxyethyl)-thiazole + ADP + H(+). The protein operates within cofactor biosynthesis; thiamine diphosphate biosynthesis; 4-methyl-5-(2-phosphoethyl)-thiazole from 5-(2-hydroxyethyl)-4-methylthiazole: step 1/1. In terms of biological role, catalyzes the phosphorylation of the hydroxyl group of 4-methyl-5-beta-hydroxyethylthiazole (THZ). The polypeptide is Hydroxyethylthiazole kinase (Rhodococcus erythropolis (strain PR4 / NBRC 100887)).